The following is a 266-amino-acid chain: MPSIHVSKCADPAIKLAHRIAEVVRSKPNCVLGLATGSTPIPVYQELARLHREEGLDFSQVRTFNLDEYAGLPPTHDQTYRFFMEEHLFSKVNIKPENVHFLNGMASDYEKECERYEQELKAIGPCDVWLLGIGHNGHIAFNEPGSPRDSRTRVVCLTQSTIDANARFFGNDKSKVPTKALSVGIATIMESREILLLATGESKREAVTKSVKGKCETHCPASFLHEHPHCRFYVDMDAGKVVDNTCCQATNQASCCGSTSCHAAKA.

Aspartate 67 (proton acceptor; for enolization step) is an active-site residue. The For ring-opening step role is filled by asparagine 136. Histidine 138 functions as the Proton acceptor; for ring-opening step in the catalytic mechanism. Catalysis depends on glutamate 143, which acts as the For ring-opening step.

Belongs to the glucosamine/galactosamine-6-phosphate isomerase family. In terms of assembly, homohexamer.

It is found in the cytoplasm. It catalyses the reaction alpha-D-glucosamine 6-phosphate + H2O = beta-D-fructose 6-phosphate + NH4(+). Catalyzes the reversible conversion of alpha-D-glucosamine 6-phosphate (GlcN-6P) into beta-D-fructose 6-phosphate (Fru-6P) and ammonium ion, a regulatory reaction step in de novo uridine diphosphate-N-acetyl-alpha-D-glucosamine (UDP-GlcNAc) biosynthesis via hexosamine pathway. The polypeptide is Glucosamine-6-phosphate deaminase 1 (GPI1) (Giardia intestinalis (Giardia lamblia)).